We begin with the raw amino-acid sequence, 381 residues long: Cytochrome b (381 aa).

Helical transmembrane passes span 36-56 (FGSL…FLTM), 80-101 (WLIR…YIHI), 116-136 (WMVG…GYVL), and 181-201 (FYTF…IHLL). The heme b site is built by His-86 and His-100. Heme b is bound by residues His-185 and His-199. His-204 provides a ligand contact to a ubiquinone. The next 4 helical transmembrane spans lie at 229–249 (FKDM…TLTN), 291–311 (LGGV…PLTF), 323–343 (MNQI…WIGA), and 350–370 (YVFV…INPM).

It belongs to the cytochrome b family. In terms of assembly, the main subunits of complex b-c1 are: cytochrome b, cytochrome c1 and the Rieske protein. Requires heme b as cofactor.

Its subcellular location is the mitochondrion inner membrane. Functionally, component of the ubiquinol-cytochrome c reductase complex (complex III or cytochrome b-c1 complex) that is part of the mitochondrial respiratory chain. The b-c1 complex mediates electron transfer from ubiquinol to cytochrome c. Contributes to the generation of a proton gradient across the mitochondrial membrane that is then used for ATP synthesis. The protein is Cytochrome b (MT-CYB) of Ostrinia nubilalis (European corn borer).